The chain runs to 130 residues: Small ribosomal subunit protein uS8 (130 aa).

Belongs to the universal ribosomal protein uS8 family. In terms of assembly, part of the 30S ribosomal subunit.

Functionally, one of the primary rRNA binding proteins, it binds directly to 16S rRNA central domain where it helps coordinate assembly of the platform of the 30S subunit. This is Small ribosomal subunit protein uS8 from Pyrococcus abyssi (strain GE5 / Orsay).